A 210-amino-acid polypeptide reads, in one-letter code: Aminoglycoside 2'-N-acetyltransferase (210 aa).

In terms of domain architecture, N-acetyltransferase spans 21–189; that stretch reads IHTSDLDQET…SLFVLPVDLP (169 aa). Residues Asp54 and 106–107 contribute to the substrate site; that span reads EA. Residues 108–110 and 115–120 each bind CoA; these read VAV and RGDGLG. Substrate contacts are provided by residues Ser141 and 176-177; that span reads ED.

It belongs to the AAC(2')-I acetyltransferase family. As to quaternary structure, homodimer.

Its function is as follows. Catalyzes the coenzyme A-dependent acetylation of the 2' hydroxyl or amino group of a broad spectrum of aminoglycosides. It confers resistance to aminoglycosides. In Mycolicibacterium smegmatis (strain ATCC 700084 / mc(2)155) (Mycobacterium smegmatis), this protein is Aminoglycoside 2'-N-acetyltransferase (aac).